We begin with the raw amino-acid sequence, 201 residues long: MASGDDSPIFEDDESPPYSLEKMTDLVAVWEVALSDGVHKIEFEHGTTSGKRVVYVDGKEVIRKEWMFKLVGKETFCVGAAKTKATINIDAVSGFAYEYTLEINGKSLKKYMENRSKTTNTWVLHLDSEDFRVVLEKDTLDVWCNGKKMETAGEFVDDGTETHFNIGNHDCYIKAVSSGKRKEGIIHSLIVDNREIPEIVE.

Belongs to the FAIM1 family.

It is found in the cytoplasm. Functionally, plays a role as an inducible effector molecule that mediates Fas resistance produced by surface Ig engagement in B cells. The polypeptide is Fas apoptotic inhibitory molecule 1 (FAIM) (Bos taurus (Bovine)).